The sequence spans 64 residues: Conotoxin Cal6.26 (64 aa).

An N-terminal signal peptide occupies residues 1–22 (MKLTCVMIVAVLVLTVCKVVTS). 3 cysteine pairs are disulfide-bonded: Cys-32–Cys-50, Cys-40–Cys-54, and Cys-49–Cys-60.

Expressed by the venom duct.

It is found in the secreted. In terms of biological role, probable neurotoxin. This chain is Conotoxin Cal6.26, found in Californiconus californicus (California cone).